We begin with the raw amino-acid sequence, 401 residues long: tRNA(Ile)-lysidine synthase (401 aa).

Residue 17–22 participates in ATP binding; that stretch reads SGGPDS.

This sequence belongs to the tRNA(Ile)-lysidine synthase family.

It is found in the cytoplasm. The enzyme catalyses cytidine(34) in tRNA(Ile2) + L-lysine + ATP = lysidine(34) in tRNA(Ile2) + AMP + diphosphate + H(+). In terms of biological role, ligates lysine onto the cytidine present at position 34 of the AUA codon-specific tRNA(Ile) that contains the anticodon CAU, in an ATP-dependent manner. Cytidine is converted to lysidine, thus changing the amino acid specificity of the tRNA from methionine to isoleucine. This Mycoplasma mycoides subsp. mycoides SC (strain CCUG 32753 / NCTC 10114 / PG1) protein is tRNA(Ile)-lysidine synthase.